The following is a 698-amino-acid chain: Serine/threonine-protein kinase Nek8 (698 aa).

The 255-residue stretch at 4-258 folds into the Protein kinase domain; the sequence is YERIRVVGRG…LSHIMAQPLC (255 aa). Residues 10–18 and Lys33 contribute to the ATP site; that span reads VGRGAFGIV. The active-site Proton acceptor is the Asp128. At Thr162 the chain carries Phosphothreonine; by autocatalysis. The disordered stretch occupies residues 278–309; it reads EKSLTPGPPIASGSTGSRATSARCRGVPRGPV. Over residues 288–309 the composition is skewed to low complexity; it reads ASGSTGSRATSARCRGVPRGPV. RCC1 repeat units follow at residues 416–467, 468–519, 520–585, 586–637, and 638–690; these read GIIM…LSTD, GELF…LTSP, GRVL…ITAS, GDCY…VGAE, and GEVY…AVRS.

This sequence belongs to the protein kinase superfamily. NEK Ser/Thr protein kinase family. NIMA subfamily. Interacts with PKD2; may regulate PKD2 targeting to the cilium. Interacts with ANKS6. Component of a complex containing at least ANKS6, INVS, NEK8 and NPHP3. ANKS6 may organize complex assembly by linking INVS and NPHP3 to NEK8 and INVS may target the complex to the proximal ciliary axoneme. Interacts with ANKS3. It depends on Mg(2+) as a cofactor. Kidney, liver, and testis.

The protein localises to the cytoplasm. The protein resides in the cytoskeleton. Its subcellular location is the cell projection. It is found in the cilium. It localises to the microtubule organizing center. The protein localises to the centrosome. The protein resides in the cilium axoneme. It catalyses the reaction L-seryl-[protein] + ATP = O-phospho-L-seryl-[protein] + ADP + H(+). The catalysed reaction is L-threonyl-[protein] + ATP = O-phospho-L-threonyl-[protein] + ADP + H(+). Required for renal tubular integrity. May regulate local cytoskeletal structure in kidney tubule epithelial cells. May regulate ciliary biogenesis through targeting of proteins to the cilia. Plays a role in organogenesis and is involved in the regulation of the Hippo signaling pathway. In Mus musculus (Mouse), this protein is Serine/threonine-protein kinase Nek8 (Nek8).